Reading from the N-terminus, the 409-residue chain is Sprouty-related, EVH1 domain-containing protein 2 (409 aa).

The WH1 domain maps to 5–121 (APPEDDSYIV…RGVRKAIEDL (117 aa)). The interval 121–170 (LTEGSTTSSSTIHNEAELGDDDVFATSTDSSSNSSQKREPPVRTIASPLP) is disordered. A compositionally biased stretch (polar residues) spans 123 to 133 (EGSTTSSSTIH). Residues 146–155 (TSTDSSSNSS) are compositionally biased toward low complexity. Residues 199 to 253 (PHRHVSFPDDDDEIVRINPRERNWLTGYEDYRQAPIHRKYPDTESIDSYVRFAKS) enclose the KBD domain. The region spanning 299–407 (RCIYCRDMFN…CGCCGGKHKA (109 aa)) is the SPR domain.

It localises to the cell membrane. Its subcellular location is the cytoplasmic vesicle. The protein localises to the secretory vesicle membrane. It is found in the cytoplasm. In terms of biological role, negatively regulates Ras signaling pathways and downstream activation of MAP kinases. The chain is Sprouty-related, EVH1 domain-containing protein 2 (spred2) from Xenopus tropicalis (Western clawed frog).